We begin with the raw amino-acid sequence, 222 residues long: Pectate lyase A (222 aa).

An N-terminal signal peptide occupies residues 1–26 (MKKMLTLLLSAGLVASIFGVMPAAAA).

It belongs to the polysaccharide lyase 3 family. Ca(2+) is required as a cofactor.

The protein resides in the secreted. The catalysed reaction is Eliminative cleavage of (1-&gt;4)-alpha-D-galacturonan to give oligosaccharides with 4-deoxy-alpha-D-galact-4-enuronosyl groups at their non-reducing ends.. The enzyme catalyses Eliminative cleavage of (1-&gt;4)-alpha-D-galacturonan methyl ester to give oligosaccharides with 4-deoxy-6-O-methyl-alpha-D-galact-4-enuronosyl groups at their non-reducing ends.. The protein operates within glycan metabolism; pectin degradation. In terms of biological role, catalyzes the depolymerization of both polygalacturonate and pectins with low (20-34%) and high (90%) levels of methyl esterification, with an endo mode of action. In contrast to the majority of pectate lyases, displays high activity on highly methylated pectins. Does not show xylanase and cellulase activity. This is Pectate lyase A from Paenibacillus amylolyticus.